The following is a 298-amino-acid chain: Probable 2-(5''-triphosphoribosyl)-3'-dephosphocoenzyme-A synthase (298 aa).

Belongs to the CitG/MdcB family.

The enzyme catalyses 3'-dephospho-CoA + ATP = 2'-(5''-triphospho-alpha-D-ribosyl)-3'-dephospho-CoA + adenine. This chain is Probable 2-(5''-triphosphoribosyl)-3'-dephosphocoenzyme-A synthase, found in Salmonella arizonae (strain ATCC BAA-731 / CDC346-86 / RSK2980).